The sequence spans 503 residues: MSIKAEEISSLIKQQLEHYDDKLDINEVGVVTYVGDGIARAHGLDDVLSGELLKFDNGSFGIAQNLESNDVGIIILGQFDNIREGDRVQRTGRIMEVPVGDALIGRVVNPLGQPVDGLGEIKSDKTRPIEAKAPGVMDRQSVNQPLQTGIKAIDALVPIGRGQRELIIGDRKTGKTSLAIDTILNQKGQDVICIYVAIGQKESTVRTQVETLKRFGAMDYTIVVEAGPSEPAPMLYIAPYAGTAMGEEFMYNGKDVLIVFDDLSKQAVAYRELSLLLRRPPGREAYPGDVFYLHSRLLERSAKLSDKLGGGSLTALPIIQTEAGDISAYIPTNVISITDGQIFLQSDLFFAGTRPAIDAGNSVSRVGGNAQIKAMKKVAGTLRTDLTAYRELESFAQFGSDLDQATQAKLNRGQRTVEVLKQPLHDPIPVEKQVLILYALTHGYLDAIPVEDISRFQNELFDNFDSSHADLLKTIRETGKLPDDKELSAAIEEFSESFTPSEK.

169–176 (GDRKTGKT) contacts ATP.

It belongs to the ATPase alpha/beta chains family. In terms of assembly, F-type ATPases have 2 components, CF(1) - the catalytic core - and CF(0) - the membrane proton channel. CF(1) has five subunits: alpha(3), beta(3), gamma(1), delta(1), epsilon(1). CF(0) has three main subunits: a(1), b(2) and c(9-12). The alpha and beta chains form an alternating ring which encloses part of the gamma chain. CF(1) is attached to CF(0) by a central stalk formed by the gamma and epsilon chains, while a peripheral stalk is formed by the delta and b chains.

It is found in the cell membrane. The enzyme catalyses ATP + H2O + 4 H(+)(in) = ADP + phosphate + 5 H(+)(out). With respect to regulation, increases 2-fold following exposure to low pH. In terms of biological role, produces ATP from ADP in the presence of a proton gradient across the membrane. The alpha chain is a regulatory subunit. This chain is ATP synthase subunit alpha, found in Lactobacillus acidophilus (strain ATCC 700396 / NCK56 / N2 / NCFM).